Here is a 97-residue protein sequence, read N- to C-terminus: Unclassified hydrophobin F (97 aa).

Residues 1–17 form the signal peptide; it reads MRVSALAFAAVLSLVSA. Cystine bridges form between Cys24-Cys75, Cys39-Cys67, Cys40-Cys58, and Cys76-Cys85.

The protein localises to the secreted. The protein resides in the cell wall. Functionally, aerial growth, conidiation, and dispersal of filamentous fungi in the environment rely upon a capability of their secreting small amphipathic proteins called hydrophobins (HPBs) with low sequence identity. Class I can self-assemble into an outermost layer of rodlet bundles on aerial cell surfaces, conferring cellular hydrophobicity that supports fungal growth, development and dispersal; whereas Class II form highly ordered films at water-air interfaces through intermolecular interactions but contribute nothing to the rodlet structure. In P.expansum, hydrophobins contribute to germination, tolerance to cold stress and mycotoxins patulin and citrinin production. HfbC, HfbD, HfbE, and HfbF have functional redundancy in fungal surface hydrophobicity. This chain is Unclassified hydrophobin F, found in Penicillium expansum (Blue mold rot fungus).